Reading from the N-terminus, the 276-residue chain is Cell division protein FtsQ (276 aa).

Residues 1-11 are Cytoplasmic-facing; it reads MQYILKLKYYL. Residues 12–32 form a helical membrane-spanning segment; the sequence is YNITWKLVFICVMLVLLIVGI. At 33–276 the chain is on the periplasmic side; the sequence is HKNIKWVCDY…NVSKGSHDYD (244 aa). Positions 45–115 constitute a POTRA domain; that stretch reads GPLSYIIVTG…NTLKINLIEY (71 aa).

The protein belongs to the FtsQ/DivIB family. FtsQ subfamily. Part of a complex composed of FtsB, FtsL and FtsQ.

The protein localises to the cell inner membrane. Essential cell division protein. May link together the upstream cell division proteins, which are predominantly cytoplasmic, with the downstream cell division proteins, which are predominantly periplasmic. May control correct divisome assembly. The polypeptide is Cell division protein FtsQ (Blochmanniella floridana).